Here is a 432-residue protein sequence, read N- to C-terminus: Trigger factor (432 aa).

The region spanning 161–246 (EDRVTIDFTG…LKKVEERELP (86 aa)) is the PPIase FKBP-type domain.

The protein belongs to the FKBP-type PPIase family. Tig subfamily. Homodimer and monomer. In vivo most of the ribosomes are in complex with monomeric TF. Uncomplexed TF, however, is in a monomer-dimer equilibrium with approximately two thirds of TF existing in a dimeric state.

Its subcellular location is the cytoplasm. It catalyses the reaction [protein]-peptidylproline (omega=180) = [protein]-peptidylproline (omega=0). Its function is as follows. Involved in protein export. Acts as a chaperone by maintaining the newly synthesized protein in an open conformation. Functions as a peptidyl-prolyl cis-trans isomerase. This is Trigger factor from Escherichia coli O139:H28 (strain E24377A / ETEC).